A 245-amino-acid chain; its full sequence is ATP synthase subunit a, chloroplastic (245 aa).

Helical transmembrane passes span 34 to 54 (TLMT…LSNL), 93 to 113 (VPFL…GALL), 132 to 152 (INTT…AGIS), 197 to 217 (LVIA…LMLL), and 218 to 238 (GLFT…AYIG).

Belongs to the ATPase A chain family. As to quaternary structure, F-type ATPases have 2 components, CF(1) - the catalytic core - and CF(0) - the membrane proton channel. CF(1) has five subunits: alpha(3), beta(3), gamma(1), delta(1), epsilon(1). CF(0) has four main subunits: a, b, b' and c.

It is found in the plastid. Its subcellular location is the chloroplast thylakoid membrane. In terms of biological role, key component of the proton channel; it plays a direct role in the translocation of protons across the membrane. This chain is ATP synthase subunit a, chloroplastic, found in Bigelowiella natans (Pedinomonas minutissima).